The sequence spans 539 residues: Propionyl-CoA carboxylase beta chain, mitochondrial (539 aa).

The transit peptide at 1 to 28 (MAAAVRVTAARARLRVVVRSLHAGVRSL) directs the protein to the mitochondrion. The 259-residue stretch at 32–290 (PVSVNERIEN…SNQDPAPIRE (259 aa)) folds into the CoA carboxyltransferase N-terminal domain. The segment at 32-533 (PVSVNERIEN…SKKVQRPWRK (502 aa)) is carboxyltransferase. Ser71 carries the phosphoserine modification. Lys99 carries the post-translational modification N6-acetyllysine; alternate. Lys99 carries the post-translational modification N6-succinyllysine; alternate. The region spanning 294–533 (PSDRLVPELD…SKKVQRPWRK (240 aa)) is the CoA carboxyltransferase C-terminal domain. Residues 325 to 358 (DERDFFEIMPNYAKNIIVGFARMNGRTVGIVGNQ) are acyl-CoA binding. Lys474 and Lys489 each carry N6-acetyllysine; alternate. 2 positions are modified to N6-succinyllysine; alternate: Lys474 and Lys489.

Belongs to the AccD/PCCB family. In terms of assembly, the holoenzyme is a dodecamer composed of 6 PCCA/alpha subunits and 6 PCCB/beta subunits.

The protein localises to the mitochondrion matrix. It catalyses the reaction propanoyl-CoA + hydrogencarbonate + ATP = (S)-methylmalonyl-CoA + ADP + phosphate + H(+). It carries out the reaction butanoyl-CoA + hydrogencarbonate + ATP = (2S)-ethylmalonyl-CoA + ADP + phosphate + H(+). It participates in metabolic intermediate metabolism; propanoyl-CoA degradation; succinyl-CoA from propanoyl-CoA: step 1/3. Functionally, this is one of the 2 subunits of the biotin-dependent propionyl-CoA carboxylase (PCC), a mitochondrial enzyme involved in the catabolism of odd chain fatty acids, branched-chain amino acids isoleucine, threonine, methionine, and valine and other metabolites. Propionyl-CoA carboxylase catalyzes the carboxylation of propionyl-CoA/propanoyl-CoA to D-methylmalonyl-CoA/(S)-methylmalonyl-CoA. Within the holoenzyme, the alpha subunit catalyzes the ATP-dependent carboxylation of the biotin carried by the biotin carboxyl carrier (BCC) domain, while the beta subunit then transfers the carboxyl group from carboxylated biotin to propionyl-CoA. Propionyl-CoA carboxylase also significantly acts on butyryl-CoA/butanoyl-CoA, which is converted to ethylmalonyl-CoA/(2S)-ethylmalonyl-CoA at a much lower rate. Other alternative minor substrates include (2E)-butenoyl-CoA/crotonoyl-CoA. This is Propionyl-CoA carboxylase beta chain, mitochondrial from Sus scrofa (Pig).